The primary structure comprises 437 residues: UDP-N-acetylmuramate--L-alanine ligase (437 aa).

108 to 114 (GAHGKTS) is an ATP binding site.

The protein belongs to the MurCDEF family.

The protein localises to the cytoplasm. The catalysed reaction is UDP-N-acetyl-alpha-D-muramate + L-alanine + ATP = UDP-N-acetyl-alpha-D-muramoyl-L-alanine + ADP + phosphate + H(+). It functions in the pathway cell wall biogenesis; peptidoglycan biosynthesis. Functionally, cell wall formation. The sequence is that of UDP-N-acetylmuramate--L-alanine ligase from Lysinibacillus sphaericus (strain C3-41).